A 503-amino-acid polypeptide reads, in one-letter code: MSPESGHETISGTSDFVVVANRLPVDLERLPDGTTRWKRSPGGLVTALEPLLRKRRGSWIGWAGVADSDEEPIVQDGLQLHPVRLSADDVAKYYEGFSNATLWPLYHDLIVKPEYHREWWDRYVEVNRRFAEATARAAAEGATVWIQDYQLQLVPKMLRMLRPDVTIGFFLHIPFPPVELFMQMPWRTEIVEGLLGADLVGFHLPGGAQNFLVLSRRLVGANTSRASIGVRSRFGEVQVGFRTVKVGAFPISIDSAELDGKARNRAIRQRARQIRAELGNPRKIMLGVDRLDYTKGIDVRLRALSELLEEKRIKRDDTVLVQLATPSRERVESYIAMREDIERQVGHINGEYGEVGHPIVHYLHRPIPRDELIAFFVAADVMLVTPLRDGMNLVAKEYVACRSDLGGALVLSEFTGAAAELRQAYLVNPHDLEGVKDKIEAAVNQNPEEGKRRMRALRRQVLAHDVDRWARSFLDALAATGETGDSGVTGESTPAPESDSGSF.

Position 22 (arginine 22) interacts with D-glucose 6-phosphate. 42-43 (GG) is a UDP-alpha-D-glucose binding site. Positions 94 and 148 each coordinate D-glucose 6-phosphate. UDP-alpha-D-glucose is bound by residues arginine 290 and lysine 295. Residue arginine 328 coordinates D-glucose 6-phosphate. A UDP-alpha-D-glucose-binding site is contributed by 393 to 397 (LVAKE). Residues 481–503 (GETGDSGVTGESTPAPESDSGSF) are disordered.

Belongs to the glycosyltransferase 20 family. In terms of assembly, homotetramer.

It catalyses the reaction ADP-alpha-D-glucose + D-glucose 6-phosphate = alpha,alpha-trehalose 6-phosphate + ADP + H(+). The catalysed reaction is CDP-alpha-D-glucose + D-glucose 6-phosphate = alpha,alpha-trehalose 6-phosphate + CDP + H(+). It carries out the reaction GDP-alpha-D-glucose + D-glucose 6-phosphate = alpha,alpha-trehalose 6-phosphate + GDP + H(+). The enzyme catalyses TDP-alpha-D-glucose + D-glucose 6-phosphate = 5-methyl-UDP + alpha,alpha-trehalose 6-phosphate + H(+). It catalyses the reaction D-glucose 6-phosphate + UDP-alpha-D-glucose = alpha,alpha-trehalose 6-phosphate + UDP + H(+). Its pathway is glycan biosynthesis; trehalose biosynthesis. Stimulated by the polynucleotide FII (physiological activator), and by chondroitin sulfate (CS) and heparin. Activation by the polyanion is inhibited by high salt concentration as well as by high concentrations of mononucleoside phosphates. In terms of biological role, involved in the production of glycogen and alpha-glucan via the TreS-Pep2 branch involved in the biosynthesis of maltose-1-phosphate (M1P), and probably in the osmoprotection via the biosynthesis of trehalose. Catalyzes the transfer of glucose from UDP-glucose (UDP-Glc) to glucose-6-phosphate (Glc-6-P) to form trehalose-6-phosphate. ADP-Glc, CDP-Glc, GDP-Glc and TDP-Glc are also glucosyl donors, however, when the pyrimidine sugar nucleotides (CDP-Glc, TDP-Glc and UDP-Glc) are used as substrates, there is an absolute requirement for a high molecular weight polyanion for activity. The chain is Trehalose-6-phosphate synthase from Mycolicibacterium smegmatis (strain ATCC 700084 / mc(2)155) (Mycobacterium smegmatis).